The primary structure comprises 315 residues: Homocysteine S-methyltransferase YbgG (315 aa).

The region spanning 2-309 is the Hcy-binding domain; sequence NPIQHILDTY…ENIQEIAAWA (308 aa). The Zn(2+) site is built by C229, C294, and C295.

The cofactor is Zn(2+).

The enzyme catalyses S-methyl-L-methionine + L-homocysteine = 2 L-methionine + H(+). In Bacillus subtilis (strain 168), this protein is Homocysteine S-methyltransferase YbgG (ybgG).